The chain runs to 3019 residues: Genome polyprotein (3019 aa).

At serine 2 the chain carries N-acetylserine; by host. The interaction with STAT1 stretch occupies residues 2 to 23 (STLPKPQRITKRNINRRPQDVK). Residues 2–58 (STLPKPQRITKRNINRRPQDVKFPGGGQIVGGVYVLPRRGPKLGVRAVRKTSERSQP) form an interaction with EIF2AK2/PKR region. Residues 2 to 59 (STLPKPQRITKRNINRRPQDVKFPGGGQIVGGVYVLPRRGPKLGVRAVRKTSERSQPR) form an interaction with DDX3X region. The tract at residues 2 to 75 (STLPKPQRIT…PRARRTEGRS (74 aa)) is disordered. Residues 2-168 (STLPKPQRIT…EDGINFATGN (167 aa)) are Cytoplasmic-facing. Short sequence motifs (nuclear localization signal) lie at residues 5-13 (PKPQRITKR) and 38-43 (PRRGPK). Serine 53 carries the phosphoserine; by host modification. Short sequence motifs (nuclear localization signal) lie at residues 58-64 (PRSRRQP) and 66-71 (PRARRT). Basic residues predominate over residues 58–68 (PRSRRQPIPRA). A phosphoserine; by host mark is found at serine 99 and serine 116. An important for endoplasmic reticulum and mitochondrial localization region spans residues 112–152 (PRRRSRNLGKVIDTLTCGFADLMGYIPLVGAPVGGVARALA). Residues 122 to 173 (VIDTLTCGFADLMGYIPLVGAPVGGVARALAHGVRALEDGINFATGNLPGCS) are interaction with APOA2. The interval 164–167 (FATG) is important for lipid droplets localization. The chain crosses the membrane as a helical span at residues 169–189 (LPGCSFSIFLLALLSCLLTPT). Residues 178-191 (LLALLSCLLTPTAG) constitute a propeptide, ER anchor for the core protein, removed in mature form by host signal peptidase. Topologically, residues 190–358 (AGLEYRNASG…IGAHWGVMAG (169 aa)) are lumenal. N-linked (GlcNAc...) asparagine; by host glycans are attached at residues asparagine 196, asparagine 209, and asparagine 234. The tract at residues 265–296 (MVGAATLCSALYVGDLCGALFLVGQGFSWRHR) is important for fusion. An N-linked (GlcNAc...) asparagine; by host glycan is attached at asparagine 305. The helical transmembrane segment at 359–379 (VAYYSMQGNWAKVFLVLCLFS) threads the bilayer. Residues 380-730 (GVDASTTITG…WEFVILIFLL (351 aa)) are Lumenal-facing. The tract at residues 385-412 (TTITGGVAASGAFTITSLFSTGAKQPLH) is HVR1. Asparagine 417, asparagine 423, and asparagine 430 each carry an N-linked (GlcNAc...) (high mannose) asparagine; by host glycan. Intrachain disulfides connect cysteine 429/cysteine 553, cysteine 452/cysteine 459, cysteine 487/cysteine 495, and cysteine 504/cysteine 509. Residue asparagine 448 is glycosylated (N-linked (GlcNAc...) asparagine; by host). The segment at 475–479 (ANISG) is HVR2. Asparagine 476 carries an N-linked (GlcNAc...) asparagine; by host glycan. Residues 481 to 494 (SSEKPYCWHYAPRP) are CD81-binding 1. Residue asparagine 533 is glycosylated (N-linked (GlcNAc...) asparagine; by host). Positions 545–552 (PPTEPWFG) are CD81-binding 2. An N-linked (GlcNAc...) asparagine; by host glycan is attached at asparagine 557. Cystine bridges form between cysteine 565-cysteine 570, cysteine 586-cysteine 590, cysteine 602-cysteine 625, and cysteine 612-cysteine 649. Residues asparagine 628 and asparagine 650 are each glycosylated (N-linked (GlcNAc...) (high mannose) asparagine; by host). Cysteine 657 and cysteine 682 are oxidised to a cystine. The interval 665 to 676 (SEMYPLLHSTTE) is PKR/eIF2-alpha phosphorylation homology domain (PePHD). Residues 731-751 (LADARVCVVLWMMMLISQAEA) form a helical membrane-spanning segment. Residues 752 to 762 (ALENLIVLNAI) are Lumenal-facing. The helical transmembrane segment at 763–783 (SAAGTHGIWWSLVAFCVAWHV) threads the bilayer. At 784-786 (RGR) the chain is on the cytoplasmic side. Residues 787-808 (IFPIAVYSIVGLWPLLLLVLML) form a helical membrane-spanning segment. At 809–818 (PYRAYAWTGT) the chain is on the lumenal side. A helical membrane pass occupies residues 819 to 839 (DTSTLGAGVLSLFALFTLSPW). The Cytoplasmic segment spans residues 840-843 (YKHW). Residues 844-863 (IARLIWWNQYTIARCEAALQ) traverse the membrane as a helical segment. At 864–886 (IWVPPLLARGARDGIILLAGLFY) the chain is on the lumenal side. The helical transmembrane segment at 887–907 (PALVFDITKLLLAILGPLYIL) threads the bilayer. Residues 908 to 1031 (QASLVRVPYF…DYRSMGWRLL (124 aa)) enclose the Peptidase C18 domain. Residues 908–1662 (QASLVRVPYF…CMAADLEVAT (755 aa)) are Cytoplasmic-facing. The tract at residues 909 to 1211 (ASLVRVPYFV…PVESLSAQTR (303 aa)) is protease NS2-3. Cysteine 927 carries S-palmitoyl cysteine; by host lipidation. The tract at residues 934–954 (TGGKYVQMVLLALARGFNTYL) is interaction with host SCPS1. Active-site for protease NS2 activity; shared with dimeric partner residues include histidine 957, glutamate 977, and cysteine 998. The region spanning 1032-1213 (APITAHAQQT…ESLSAQTRSP (182 aa)) is the Peptidase S29 domain. Active-site charge relay system; for serine protease NS3 activity residues include histidine 1088 and aspartate 1112. Positions 1128 and 1130 each coordinate Zn(2+). The Charge relay system; for serine protease NS3 activity role is filled by serine 1170. Cysteine 1176 and histidine 1180 together coordinate Zn(2+). Position 1235–1242 (1235–1242 (APTGSGES)) interacts with ATP. The Mg(2+) site is built by serine 1242 and glutamate 1322. The DECH box motif lies at 1321-1324 (DECH). The 178-residue stretch at 1366 to 1543 (NIEEVALTGE…ELTPSETTVR (178 aa)) folds into the Helicase C-terminal domain. The tract at residues 1482–1505 (VPQDAVSRSQRRGRTGRGKSGTYR) is disordered. The segment at 1491-1503 (QRRGRTGRGKSGT) is RNA-binding. The chain crosses the membrane as a helical span at residues 1663–1683 (SAWVLLGGVMAALTAYCLSVG). Residues 1684–1695 (SVVIVGHLVLGG) form an NS3-binding region. At 1684 to 1810 (SVVIVGHLVL…SVTSPLTTNQ (127 aa)) the chain is on the cytoplasmic side. A helical transmembrane segment spans residues 1811 to 1829 (TLLFNIMGGWVASNLAPPP). The Lumenal segment spans residues 1830–1833 (ASTA). The chain crosses the membrane as a helical span at residues 1834-1854 (FVVSGLAGAAVGSIGLGKVLL). Position 1855 (aspartate 1855) is a topological domain, cytoplasmic. A helical transmembrane segment spans residues 1856-1876 (ILAGYGAGVAGALVAFKIMGG). The Lumenal portion of the chain corresponds to 1877 to 1886 (EMPSTEDMVN). A helical membrane pass occupies residues 1887–1907 (LLPAILSPGALVVGVICAAIL). The Cytoplasmic portion of the chain corresponds to 1908–1977 (RRHVGPGEGA…WINEDYPTPC (70 aa)). Cysteine 1977 is lipidated: S-palmitoyl cysteine; by host. Residues 1978–2007 (DGNWLYDIWNWVCTVLADFKLWLGAKILPK) lie within the membrane without spanning it. Over 2008–2998 (MPGIPFLSCQ…YHSVSRARSR (991 aa)) the chain is Cytoplasmic. The Zn(2+) site is built by cysteine 2016, cysteine 2034, cysteine 2036, and cysteine 2057. Residues 2125–2213 (EFFTELDGVR…ASSSASQLSA (89 aa)) form an FKBP8-binding region. The segment at 2125 to 2337 (EFFTELDGVR…PVPPPRRKRT (213 aa)) is transcriptional activation. The interval 2140 to 2144 (PVCRP) is interaction with non-structural protein 4A. The interval 2191–2225 (AKRRLDRGSPPSLASSSASQLSAPSRKATCTTHGR) is disordered. The interaction with host SKP2 stretch occupies residues 2194–2446 (RLDRGSPPSL…ALITPCAAEE (253 aa)). 6 positions are modified to phosphoserine; by host: serine 2199, serine 2202, serine 2206, serine 2209, serine 2212, and serine 2215. Residues 2199-2215 (SPPSLASSSASQLSAPS) show a composition bias toward low complexity. Positions 2215-2254 (SRKATCTTHGRHPDAELITANLLWRQEMGSNITRVESESK) are ISDR. The interaction with EIF2AK2/PKR stretch occupies residues 2215-2280 (SRKATCTTHG…DELSVAAECF (66 aa)). The tract at residues 2254–2311 (KVVILDSFEPLRACDDEDELSVAAECFKKPPKYPPALPIWARPDYNPPLVEPWKDPDY) is NS4B-binding. Residues 2304–2382 (EPWKDPDYVP…GTQSGSLTGP (79 aa)) are V3. The SH3-binding motif lies at 2327-2330 (PPVP). The short motif at 2332 to 2340 (PRRKRTIVL) is the Nuclear localization signal element. A Glycyl lysine isopeptide (Lys-Gly) (interchain with G-Cter in ubiquitin) cross-link involves residue lysine 2355. The segment at 2356–2417 (SFPQPTCSAE…PDLSSGSWST (62 aa)) is disordered. Polar residues predominate over residues 2369-2381 (TSGVGTQSGSLTG). Serine 2457 and serine 2470 each carry phosphoserine; by host. The RdRp catalytic domain maps to 2642–2760 (PLGFSYDTRC…IAESAGIDED (119 aa)). Aspartate 2648, aspartate 2746, and aspartate 2747 together coordinate Mg(2+). Residues 2999 to 3019 (HLLLGLLLLTVGVGIFLLPAR) traverse the membrane as a helical segment.

This sequence belongs to the hepacivirus polyprotein family. As to quaternary structure, homooligomer. Interacts with E1 (via C-terminus). Interacts with the non-structural protein 5A. Interacts (via N-terminus) with host STAT1 (via SH2 domain); this interaction results in decreased STAT1 phosphorylation and ubiquitin-mediated proteasome-dependent STAT1 degradation, leading to decreased IFN-stimulated gene transcription. Interacts with host STAT3; this interaction constitutively activates STAT3. Interacts with host LTBR receptor. Interacts with host TNFRSF1A receptor and possibly induces apoptosis. Interacts with host HNRPK. Interacts with host YWHAE. Interacts with host UBE3A/E6AP. Interacts with host DDX3X. Interacts with host APOA2. Interacts with host RXRA protein. Interacts with host SP110 isoform 3/Sp110b; this interaction sequesters the transcriptional corepressor SP110 away from the nucleus. Interacts with host CREB3 nuclear transcription protein; this interaction triggers cell transformation. Interacts with host ACY3. Interacts with host C1QR1. Interacts with host RBM24; this interaction, which enhances the interaction of the mature core protein with 5'-UTR, may inhibit viral translation and favor replication. Interacts with host EIF2AK2/PKR; this interaction induces the autophosphorylation of EIF2AK2. Part of the viral assembly initiation complex composed of NS2, E1, E2, NS3, NS4A, NS5A and the mature core protein. In terms of assembly, forms a heterodimer with envelope glycoprotein E2. Interacts with mature core protein. Interacts with protease NS2. The heterodimer E1/E2 interacts with host CLDN1; this interaction plays a role in viral entry into host cell. Interacts with host SPSB2 (via C-terminus). Part of the viral assembly initiation complex composed of NS2, E1, E2, NS3, NS4A, NS5A and the mature core protein. Interacts with host NEURL3; this interaction prevents E1 binding to glycoprotein E2. Forms a heterodimer with envelope glycoprotein E1. Interacts with host CD81 and SCARB1 receptors; these interactions play a role in viral entry into host cell. Interacts with host EIF2AK2/PKR; this interaction inhibits EIF2AK2 and probably allows the virus to evade the innate immune response. Interacts with host CD209/DC-SIGN and CLEC4M/DC-SIGNR. Interact with host SPCS1; this interaction is essential for viral particle assembly. Interacts with protease NS2. The heterodimer E1/E2 interacts with host CLDN1; this interaction plays a role in viral entry into host cell. Part of the viral assembly initiation complex composed of NS2, E1, E2, NS3, NS4A, NS5A and the mature core protein. Interacts with host SLC3A2/4F2hc; the interaction may facilitate viral entry into host cell. Interacts with human PLSCR1. As to quaternary structure, homohexamer. Homoheptamer. Interacts with protease NS2. In terms of assembly, homodimer. Interacts with host SPCS1; this interaction is essential for viral particle assembly. Interacts with envelope glycoprotein E1. Interacts with envelope glycoprotein E2. Interacts with viroporin p7. Interacts with serine protease/helicase NS3. Part of the replication complex composed of NS2, NS3, NS4A, NS4B, NS5A and the RNA-directed RNA polymerase embedded in an ER-derived membranous web. Part of the viral assembly initiation complex composed of NS2, E1, E2, NS3, NS4A, NS5A and the mature core protein. Interacts with protease NS2. Interacts with non-structural protein 4A; this interaction stabilizes the folding of NS3 serine protease. NS3-NS4A interaction is essential for NS3 activation and allows membrane anchorage of the latter. NS3/NS4A complex also prevents phosphorylation of host IRF3, thus preventing the establishment of dsRNA induced antiviral state. Interacts with host MAVS; this interaction leads to the cleavage and inhibition of host MAVS. Interacts with host TICAM1; this interaction leads to the cleavage and inhibition of host TICAM1. Interacts with host TANK-binding kinase/TBK1; this interaction results in the inhibition of the association between TBK1 and IRF3, which leads to the inhibition of IRF3 activation. Interacts with host RBM24. Part of the replication complex composed of NS2, NS3, NS4A, NS4B, NS5A and the RNA-directed RNA polymerase embedded in an ER-derived membranous web. Part of the viral assembly initiation complex composed of NS2, E1, E2, NS3, NS4A, NS5A and the mature core protein. As to quaternary structure, interacts with NS3 serine protease; this interaction stabilizes the folding of NS3 serine protease. NS3-NS4A interaction is essential for NS3 activation and allows membrane anchorage of the latter. Interacts with non-structural protein 5A (via N-terminus). Part of the replication complex composed of NS2, NS3, NS4A, NS4B, NS5A and the RNA-directed RNA polymerase embedded in an ER-derived membranous web. Part of the viral assembly initiation complex composed of NS2, E1, E2, NS3, NS4A, NS5A and the mature core protein. In terms of assembly, homomultimer. Interacts with non-structural protein NS5A. Interacts with host PLA2G4C; this interaction likely initiates the recruitment of replication complexes to lipid droplets. Interacts with host STING; this interaction disrupts the interaction between STING and TBK1 thereby suppressing the interferon signaling. Part of the replication complex composed of NS2, NS3, NS4A, NS4B, NS5A and the RNA-directed RNA polymerase embedded in an ER-derived membranous web. Monomer. Homodimer; dimerization is required for RNA-binding. Interacts with the mature core protein. Interacts (via N-terminus) with non-structural protein 4A. Interacts with non-structural protein 4B. Interacts (via region D2) with RNA-directed RNA polymerase. Part of the viral assembly initiation complex composed of NS2, E1, E2, NS3, NS4A, NS5A and the mature core protein. Part of the replication complex composed of NS2, NS3, NS4A, NS4B, NS5A and the RNA-directed RNA polymerase embedded in an ER-derived membranous web. Interacts with host GRB2. Interacts with host BIN1. Interacts with host PIK3R1. Interacts with host SRCAP. Interacts with host FKBP8. Interacts (via C-terminus) with host VAPB (via MSP domain). Interacts with host EIF2AK2/PKR; this interaction leads to disruption of EIF2AK2 dimerization by NS5A and probably allows the virus to evade the innate immune response. Interacts (via N-terminus) with host PACSIN2 (via N-terminus); this interaction attenuates protein kinase C alpha-mediated phosphorylation of PACSIN2 by disrupting the interaction between PACSIN2 and PRKCA. Interacts (via N-terminus) with host SRC kinase (via SH2 domain). Interacts with most Src-family kinases. Interacts with host IFI27 and SKP2; promotes the ubiquitin-mediated proteasomal degradation of NS5A. Interacts with host GPS2. Interacts with host TNFRSF21; this interaction allows the modulation by the virus of JNK, p38 MAPK, STAT3, and Akt signaling pathways in a DR6-dependent manner. Interacts (via N-terminus) with host CIDEB (via N-terminus); this interaction seems to regulate the association of HCV particles with APOE. Interacts with host CHKA/Choline Kinase-alpha; CHKA bridges host PI4KA and NS5A and potentiates NS5A-stimulated PI4KA activity, which then facilitates the targeting of the ternary complex to the ER for viral replication. Interacts with host SPSB2 (via C-terminus); this interaction targets NS5A for ubiquitination and degradation. Interacts with host RAB18; this interaction may promote the association of NS5A and other replicase components with lipid droplets. Interacts (via region D2) with host PPIA/CYPA; the interaction stimulates RNA-binding ability of NS5A and is dependent on the peptidyl-prolyl cis-trans isomerase activity of PPIA/CYPA. Interacts with host TRIM14; this interaction induces the degradation of NS5A. As to quaternary structure, homooligomer. Interacts with non-structural protein 5A. Interacts with host VAPB. Interacts with host PRK2/PKN2. Interacts with host HNRNPA1 and SEPT6; these interactions facilitate viral replication. Part of the replication complex composed of NS2, NS3, NS4A, NS4B, NS5A and the RNA-directed RNA polymerase. Zn(2+) is required as a cofactor. It depends on Mg(2+) as a cofactor. Specific enzymatic cleavages in vivo yield mature proteins. The structural proteins, core, E1, E2 and p7 are produced by proteolytic processing by host signal peptidases. The core protein precursor is synthesized as a 23 kDa, which is retained in the ER membrane through the hydrophobic signal peptide. Cleavage by the signal peptidase releases the 21 kDa mature core protein. The cleavage of the core protein precursor occurs between aminoacids 176 and 188 but the exact cleavage site is not known. Some degraded forms of the core protein appear as well during the course of infection. The other proteins (p7, NS2, NS3, NS4A, NS4B, NS5A and NS5B) are cleaved by the viral proteases. Autoprocessing between NS2 and NS3 is mediated by the NS2 cysteine protease catalytic domain and regulated by the NS3 N-terminal domain. Post-translationally, phosphorylated by host PKC and PKA. In terms of processing, ubiquitinated; mediated by UBE3A and leading to core protein subsequent proteasomal degradation. Highly N-glycosylated. Post-translationally, palmitoylation is required for NS2/3 autoprocessing and E2 recruitment to membranes. In terms of processing, palmitoylated. This modification may play a role in its polymerization or in protein-protein interactions. Phosphorylated on serines in a basal form termed p56. p58 is a hyperphosphorylated form of p56. p56 and p58 coexist in the cell in roughly equivalent amounts. Hyperphosphorylation is dependent on the presence of NS4A. Host CSNK1A1/CKI-alpha or RPS6KB1 kinases may be responsible for NS5A phosphorylation. Post-translationally, tyrosine phosphorylation is essential for the interaction with host SRC. In terms of processing, ubiquitinated. Ubiquitination, most probably at Lys-2355, mediated by host IFI27 and SKP2 leads to proteasomal degradation, restricting viral infection. Ubiquitination by host TRIM22 leads to interruption of viral replication. The N-terminus is phosphorylated by host PRK2/PKN2.

It is found in the host endoplasmic reticulum membrane. Its subcellular location is the host mitochondrion membrane. The protein localises to the virion. It localises to the host cytoplasm. The protein resides in the host nucleus. It is found in the host lipid droplet. Its subcellular location is the virion membrane. The protein localises to the host mitochondrion. It localises to the host cell membrane. The protein resides in the host perinuclear region. The catalysed reaction is Hydrolysis of four peptide bonds in the viral precursor polyprotein, commonly with Asp or Glu in the P6 position, Cys or Thr in P1 and Ser or Ala in P1'.. The enzyme catalyses a ribonucleoside 5'-triphosphate + H2O = a ribonucleoside 5'-diphosphate + phosphate + H(+). It carries out the reaction ATP + H2O = ADP + phosphate + H(+). It catalyses the reaction RNA(n) + a ribonucleoside 5'-triphosphate = RNA(n+1) + diphosphate. With respect to regulation, inhibited by the antiviral drug hexamethylene amiloride. Inhibition by amantadine appears to be genotype-dependent. Also inhibited by long-alkyl-chain iminosugar derivatives. Activity is up-regulated by PRK2/PKN2-mediated phosphorylation. Functionally, packages viral RNA to form a viral nucleocapsid, and promotes virion budding. Participates in the viral particle production as a result of its interaction with the non-structural protein 5A. Binds RNA and may function as a RNA chaperone to induce the RNA structural rearrangements taking place during virus replication. Modulates viral translation initiation by interacting with viral IRES and 40S ribosomal subunit. Affects various cell signaling pathways, host immunity and lipid metabolism. Prevents the establishment of cellular antiviral state by blocking the interferon-alpha/beta (IFN-alpha/beta) and IFN-gamma signaling pathways and by blocking the formation of phosphorylated STAT1 and promoting ubiquitin-mediated proteasome-dependent degradation of STAT1. Activates STAT3 leading to cellular transformation. Regulates the activity of cellular genes, including c-myc and c-fos. May repress the promoter of p53, and sequester CREB3 and SP110 isoform 3/Sp110b in the cytoplasm. Represses cell cycle negative regulating factor CDKN1A, thereby interrupting an important check point of normal cell cycle regulation. Targets transcription factors involved in the regulation of inflammatory responses and in the immune response: suppresses TNF-induced NF-kappa-B activation, and activates AP-1. Binds to dendritic cells (DCs) via C1QR1, resulting in down-regulation of T-lymphocytes proliferation. Alters lipid metabolism by interacting with hepatocellular proteins involved in lipid accumulation and storage. Induces up-regulation of FAS promoter activity, and thereby contributes to the increased triglyceride accumulation in hepatocytes (steatosis). Forms a heterodimer with envelope glycoprotein E2, which mediates virus attachment to the host cell, virion internalization through clathrin-dependent endocytosis and fusion with host membrane. Fusion with the host cell is most likely mediated by both E1 and E2, through conformational rearrangements of the heterodimer required for fusion rather than a classical class II fusion mechanism. E1/E2 heterodimer binds host apolipoproteins such as APOB and ApoE thereby forming a lipo-viro-particle (LVP). APOE associated to the LVP allows the initial virus attachment to cell surface receptors such as the heparan sulfate proteoglycans (HSPGs), syndecan-1 (SDC1), syndecan-1 (SDC2), the low-density lipoprotein receptor (LDLR) and scavenger receptor class B type I (SCARB1). The cholesterol transfer activity of SCARB1 allows E2 exposure and binding of E2 to SCARB1 and the tetraspanin CD81. E1/E2 heterodimer binding on CD81 activates the epithelial growth factor receptor (EGFR) signaling pathway. Diffusion of the complex E1-E2-EGFR-SCARB1-CD81 to the cell lateral membrane allows further interaction with Claudin 1 (CLDN1) and occludin (OCLN) to finally trigger HCV entry. Its function is as follows. Forms a heterodimer with envelope glycoprotein E1, which mediates virus attachment to the host cell, virion internalization through clathrin-dependent endocytosis and fusion with host membrane. Fusion with the host cell is most likely mediated by both E1 and E2, through conformational rearrangements of the heterodimer required for fusion rather than a classical class II fusion mechanism. The interaction between envelope glycoprotein E2 and host apolipoprotein E/APOE allows the proper assembly, maturation and infectivity of the viral particles. This interaction is probably promoted via the up-regulation of cellular autophagy by the virus. E1/E2 heterodimer binds host apolipoproteins such as APOB and APOE thereby forming a lipo-viro-particle (LVP). APOE associated to the LVP allows the initial virus attachment to cell surface receptors such as the heparan sulfate proteoglycans (HSPGs), syndecan-1 (SDC1), syndecan-1 (SDC2), the low-density lipoprotein receptor (LDLR) and scavenger receptor class B type I (SCARB1). The cholesterol transfer activity of SCARB1 allows E2 exposure and binding of E2 to SCARB1 and the tetraspanin CD81. E1/E2 heterodimer binding on CD81 activates the epithelial growth factor receptor (EGFR) signaling pathway. Diffusion of the complex E1-E2-EGFR-SCARB1-CD81 to the cell lateral membrane allows further interaction with Claudin 1 (CLDN1) and occludin (OCLN) to finally trigger HCV entry. Inhibits host EIF2AK2/PKR activation, preventing the establishment of an antiviral state. Viral ligand for CD209/DC-SIGN and CLEC4M/DC-SIGNR, which are respectively found on dendritic cells (DCs), and on liver sinusoidal endothelial cells and macrophage-like cells of lymph node sinuses. These interactions allow the capture of circulating HCV particles by these cells and subsequent facilitated transmission to permissive cells such as hepatocytes and lymphocyte subpopulations. The interaction between E2 and host amino acid transporter complex formed by SLC3A2 and SLC7A5/LAT1 may facilitate viral entry into host cell. In terms of biological role, ion channel protein that acts as a viroporin and plays an essential role in the assembly, envelopment and secretion of viral particles. Regulates the host cell secretory pathway, which induces the intracellular retention of viral glycoproteins and favors assembly of viral particles. Creates a pore in acidic organelles and releases Ca(2+) and H(+) in the cytoplasm of infected cells, leading to a productive viral infection. High levels of cytoplasmic Ca(2+) may trigger membrane trafficking and transport of viral ER-associated proteins to viroplasms, sites of viral genome replication. This ionic imbalance induces the assembly of the inflammasome complex, which triggers the maturation of pro-IL-1beta into IL-1beta through the action of caspase-1. Targets also host mitochondria and induces mitochondrial depolarization. In addition of its role as a viroporin, acts as a lipid raft adhesion factor. Functionally, cysteine protease required for the proteolytic auto-cleavage between the non-structural proteins NS2 and NS3. The N-terminus of NS3 is required for the function of NS2 protease (active region NS2-3). Promotes the initiation of viral particle assembly by mediating the interaction between structural and non-structural proteins. Displays three enzymatic activities: serine protease with a chymotrypsin-like fold, NTPase and RNA helicase. NS3 serine protease, in association with NS4A, is responsible for the cleavages of NS3-NS4A, NS4A-NS4B, NS4B-NS5A and NS5A-NS5B. The NS3/NS4A complex prevents phosphorylation of host IRF3, thus preventing the establishment of dsRNA induced antiviral state. The NS3/NS4A complex induces host amino acid transporter component SLC3A2, thus contributing to HCV propagation. NS3 RNA helicase binds to RNA and unwinds both dsDNA and dsRNA in the 3' to 5' direction, and likely resolves RNA complicated stable secondary structures in the template strand. Binds a single ATP and catalyzes the unzipping of a single base pair of dsRNA. Inhibits host antiviral proteins TBK1 and IRF3 thereby preventing the establishment of an antiviral state. Cleaves host MAVS/CARDIF thereby preventing the establishment of an antiviral state. Cleaves host TICAM1/TRIF, thereby disrupting TLR3 signaling and preventing the establishment of an antiviral state. Its function is as follows. Induces a specific membrane alteration that serves as a scaffold for the virus replication complex. This membrane alteration gives rise to the so-called ER-derived membranous web that contains the replication complex. NS4B self-interaction contributes to its function in membranous web formation. Promotes host TRIF protein degradation in a CASP8-dependent manner thereby inhibiting host TLR3-mediated interferon signaling. Disrupts the interaction between STING and TBK1 contributing to the inhibition of interferon signaling. In terms of biological role, phosphorylated protein that is indispensable for viral replication and assembly. Both hypo- and hyperphosphorylated states are required for the viral life cycle. The hyperphosphorylated form of NS5A is an inhibitor of viral replication. Involved in RNA-binding and especially in binding to the viral genome. Zinc is essential for RNA-binding. Participates in the viral particle production as a result of its interaction with the mature viral core protein. Its interaction with host VAPB may target the viral replication complex to vesicles. Down-regulates viral IRES translation initiation. Mediates interferon resistance, presumably by interacting with and inhibiting host EIF2AK2/PKR. Prevents BIN1-induced apoptosis. Acts as a transcriptional activator of some host genes important for viral replication when localized in the nucleus. Via the interaction with host PACSIN2, modulates lipid droplet formation in order to promote virion assembly. Modulates TNFRSF21/DR6 signaling pathway for viral propagation. Functionally, RNA-dependent RNA polymerase that performs primer-template recognition and RNA synthesis during viral replication. Initiates RNA transcription/replication at a flavin adenine dinucleotide (FAD), resulting in a 5'- FAD cap on viral RNAs. In this way, recognition of viral 5' RNA by host pattern recognition receptors can be bypassed, thereby evading activation of antiviral pathways. This is Genome polyprotein from Homo sapiens (Human).